Here is a 583-residue protein sequence, read N- to C-terminus: MLRLFRFDVLETSTKDTERPNSKSSRLSSTSGSSHPSSSSRLTVRSAVPEKSAFGSIEFIFYFSVILSILTIACFKIHYVSSPKHPNYKNIEKYLKPGWLFGQKVDSADFQYSAFRENMPILLLVIIVYNFLWRLVKLVFTKNTNDELAIKNNYRLCFSLLFALLVYGTGVIYVLTIALINYLISKSLKNSIFNPLLTWTLDISVVFFKEYFAYCKFSSLHPGLGFLDQYTGILERWYVLFNITMLRLVSFNMDYYWSLKHNSEKLNTLIFDKDREPTTLTFRERVDYSCLDEDYNLKNFLTYIFYAPLYLAGPIISFNNFMSQMKYPTVSTLKYRNLLYAIRFLVCVLTMEFLLHYAYVTAISKDGNWNQYSAVESAMISFIVLFMTWLKLLIPWRLFRLWSLIDDIEPPENIVRCMCNNYSAVGFWRAWHRSFNRWLIRYIYVPLGGSNHSILNLFIIFTFVALWHDISWELFAWGWLIVLFILPERLCCFMSRRTGLTKHPYYRYISGFGAALNIYFMIICNLIGFAVGIDGIKNVLVSFFLTLKGAMSAIAAFIMFFSAVQIMFQIRVNEEEEGINLRC.

At 1-52 (MLRLFRFDVLETSTKDTERPNSKSSRLSSTSGSSHPSSSSRLTVRSAVPEKS) the chain is on the extracellular side. The tract at residues 15–42 (KDTERPNSKSSRLSSTSGSSHPSSSSRL) is disordered. The segment covering 22–40 (SKSSRLSSTSGSSHPSSSS) has biased composition (low complexity). Residues 53 to 73 (AFGSIEFIFYFSVILSILTIA) form a helical membrane-spanning segment. The Cytoplasmic portion of the chain corresponds to 74–119 (CFKIHYVSSPKHPNYKNIEKYLKPGWLFGQKVDSADFQYSAFRENM). The chain crosses the membrane as a helical span at residues 120-140 (PILLLVIIVYNFLWRLVKLVF). Residues 141-159 (TKNTNDELAIKNNYRLCFS) are Extracellular-facing. The chain crosses the membrane as a helical span at residues 160–180 (LLFALLVYGTGVIYVLTIALI). At 181–191 (NYLISKSLKNS) the chain is on the cytoplasmic side. The helical transmembrane segment at 192-212 (IFNPLLTWTLDISVVFFKEYF) threads the bilayer. Topologically, residues 213 to 298 (AYCKFSSLHP…SCLDEDYNLK (86 aa)) are extracellular. The helical transmembrane segment at 299–319 (NFLTYIFYAPLYLAGPIISFN) threads the bilayer. Residues 320–343 (NFMSQMKYPTVSTLKYRNLLYAIR) lie on the Cytoplasmic side of the membrane. A helical membrane pass occupies residues 344 to 364 (FLVCVLTMEFLLHYAYVTAIS). Over 365–373 (KDGNWNQYS) the chain is Extracellular. Residues 374 to 394 (AVESAMISFIVLFMTWLKLLI) form a helical membrane-spanning segment. The Cytoplasmic segment spans residues 395–444 (PWRLFRLWSLIDDIEPPENIVRCMCNNYSAVGFWRAWHRSFNRWLIRYIY). The next 2 membrane-spanning stretches (helical) occupy residues 445-465 (VPLGGSNHSILNLFIIFTFVA) and 466-486 (LWHDISWELFAWGWLIVLFIL). His-468 is an active-site residue. The Cytoplasmic portion of the chain corresponds to 487 to 512 (PERLCCFMSRRTGLTKHPYYRYISGF). Residues 513–533 (GAALNIYFMIICNLIGFAVGI) form a helical membrane-spanning segment. Residues 534-549 (DGIKNVLVSFFLTLKG) lie on the Extracellular side of the membrane. The helical transmembrane segment at 550–570 (AMSAIAAFIMFFSAVQIMFQI) threads the bilayer. Topologically, residues 571 to 583 (RVNEEEEGINLRC) are cytoplasmic.

Belongs to the membrane-bound acyltransferase family.

Its subcellular location is the cell membrane. It localises to the endoplasmic reticulum membrane. The protein localises to the mitochondrion membrane. Functionally, membrane-bound O-acyltransferase involved in the remodeling of glycosylphosphatidylinositol (GPI) anchors. Acts only on GPI-anchored proteins, but not on free GPI lipids. Also involved in lipid metabolism, having profound effects on sphingolipid-sterol-ordered domains integrity and assembly. Involved in cell integrity and apoptosis. This chain is Membrane-bound O-acyltransferase gup1 (gup1), found in Schizosaccharomyces pombe (strain 972 / ATCC 24843) (Fission yeast).